Here is an 87-residue protein sequence, read N- to C-terminus: UPF0250 protein ESA_02696 (87 aa).

The protein belongs to the UPF0250 family.

The protein is UPF0250 protein ESA_02696 of Cronobacter sakazakii (strain ATCC BAA-894) (Enterobacter sakazakii).